Here is an 86-residue protein sequence, read N- to C-terminus: Neurotoxin LmNaTx34.2 (86 aa).

A signal peptide spans 1–18 (MKTLILVVIALMVIEVKS). The LCN-type CS-alpha/beta domain occupies 19–85 (DGYLMVRAGR…IWTYEKNTCS (67 aa)). 4 cysteine pairs are disulfide-bonded: Cys32–Cys84, Cys36–Cys57, Cys43–Cys64, and Cys47–Cys66.

Belongs to the long (4 C-C) scorpion toxin superfamily. Sodium channel inhibitor family. Beta subfamily. Expressed by the venom gland.

Its subcellular location is the secreted. Binds voltage-independently at site-4 of sodium channels (Nav) and shift the voltage of activation toward more negative potentials thereby affecting sodium channel activation and promoting spontaneous and repetitive firing. This is Neurotoxin LmNaTx34.2 from Lychas mucronatus (Chinese swimming scorpion).